Here is a 119-residue protein sequence, read N- to C-terminus: Small ribosomal subunit protein bS16 (119 aa).

Belongs to the bacterial ribosomal protein bS16 family.

The chain is Small ribosomal subunit protein bS16 from Chlamydia caviae (strain ATCC VR-813 / DSM 19441 / 03DC25 / GPIC) (Chlamydophila caviae).